Consider the following 206-residue polypeptide: MEYRLKAYYREGEKPSALRRAGKLPGLMYNRHLNRKVYVDLVEFDKVFRQASIHHVIVLELPDGQSLPTLVRQVNLDKRRRRPEHVDFFVLSDEPVEMYVPLRFVGTPAGVRAGGVLQEIHRDILVKVSPRNIPEFIEVDVSGLEIGDSLHASDLKLPPGVELAVSPEETIAAVVPPEDVEKLAEEAAAEVAEPEVIKKGKEEEEE.

The interval 1–91 (MEYRLKAYYR…RPEHVDFFVL (91 aa)) is bL25 domain. The CTC domain stretch occupies residues 92-206 (SDEPVEMYVP…IKKGKEEEEE (115 aa)). Positions 184–206 (AEEAAAEVAEPEVIKKGKEEEEE) are disordered. Residues 195 to 206 (EVIKKGKEEEEE) are compositionally biased toward basic and acidic residues.

The protein belongs to the bacterial ribosomal protein bL25 family. CTC subfamily. Part of the 50S ribosomal subunit. Contacts the 5S rRNA.

In terms of biological role, this is one of 3 proteins that mediate the attachment of the 5S rRNA onto the large ribosomal subunit. The sequence is that of Large ribosomal subunit protein bL25 (rplY) from Thermus thermophilus.